The sequence spans 878 residues: Vacuolar membrane protease (878 aa).

The Cytoplasmic portion of the chain corresponds to 1 to 16; that stretch reads MASLRLPRANPLAFTR. A helical membrane pass occupies residues 17–37; sequence WPVTVITAIVYLALLIPLLVV. Residues 38–390 lie on the Vacuolar side of the membrane; it reads HHVVPSAPSS…STFVLFQLHT (353 aa). Residues Asn-53 and Asn-119 are each glycosylated (N-linked (GlcNAc...) asparagine). His-174 and Asp-186 together coordinate Zn(2+). Glu-220 functions as the Proton acceptor in the catalytic mechanism. Zn(2+)-binding residues include Glu-221, Glu-246, and His-319. A helical transmembrane segment spans residues 391 to 411; the sequence is LFALLVTLLIVGPLTLLFTSI. Residues 412 to 442 are Cytoplasmic-facing; it reads ALTKADKMYLFRSSAKSEDRLDVVPLQGLRG. The helical transmembrane segment at 443-463 threads the bilayer; it reads FFRFPFLFGIPTVVTVGLAYL. Over 464–473 the chain is Vacuolar; sequence VTKVNPYIIH. The helical transmembrane segment at 474 to 494 threads the bilayer; that stretch reads SSAYAVWSMMVAAWVFLAWFV. Topologically, residues 495 to 508 are cytoplasmic; it reads SRVADFARPSAFHR. A helical membrane pass occupies residues 509–529; it reads IYTLTWMYVLSWVSAVIATVY. At 530 to 533 the chain is on the vacuolar side; that stretch reads ANQR. Residues 534–554 form a helical membrane-spanning segment; sequence GLAGGYFIFFFHAGIFLATWI. The Cytoplasmic segment spans residues 555 to 659; that stretch reads SYLELFALPS…ALPKWTWGLQ (105 aa). Residues 577 to 590 show a composition bias toward low complexity; it reads GRASGHGSRRGTTS. Positions 577-611 are disordered; the sequence is GRASGHGSRRGTTSGEDDGEEAEEEPTESTSLLGS. Residues 591–603 are compositionally biased toward acidic residues; the sequence is GEDDGEEAEEEPT. Residues 660-680 traverse the membrane as a helical segment; sequence LLLTAPITLIMVGPLALLTIS. Topologically, residues 681–693 are vacuolar; the sequence is AISQTGQDGGHPL. A helical transmembrane segment spans residues 694–714; the sequence is FAYVAIAIFTTIMLTPLLPFI. Residues 715-721 lie on the Cytoplasmic side of the membrane; the sequence is HRYTYHV. A helical membrane pass occupies residues 722-742; that stretch reads PLFLLAVFLGTLIYNLVAFPF. Topologically, residues 743-878 are vacuolar; sequence SDSNRLKLYY…RRAFEIGNDD (136 aa).

It belongs to the peptidase M28 family. The cofactor is Zn(2+).

The protein resides in the vacuole membrane. In terms of biological role, may be involved in vacuolar sorting and osmoregulation. The protein is Vacuolar membrane protease of Aspergillus flavus (strain ATCC 200026 / FGSC A1120 / IAM 13836 / NRRL 3357 / JCM 12722 / SRRC 167).